A 193-amino-acid polypeptide reads, in one-letter code: UPF0314 protein Pden_1914 (193 aa).

A run of 4 helical transmembrane segments spans residues 13–33 (APYWATFLVIVLAALWLLWIG), 62–82 (WYTPSHVIHGLVFYAALWLVA), 148–168 (LPVWASVAIVIGFEALTTWLI), and 172–192 (LALNVLMLLWPLEAVRGWQAA).

This sequence belongs to the UPF0314 family.

Its subcellular location is the cell membrane. This Paracoccus denitrificans (strain Pd 1222) protein is UPF0314 protein Pden_1914.